Here is a 554-residue protein sequence, read N- to C-terminus: Arginine--tRNA ligase (554 aa).

The short motif at 132 to 142 (ANPTGPLHIGH) is the 'HIGH' region element.

This sequence belongs to the class-I aminoacyl-tRNA synthetase family. As to quaternary structure, monomer.

It localises to the cytoplasm. The catalysed reaction is tRNA(Arg) + L-arginine + ATP = L-arginyl-tRNA(Arg) + AMP + diphosphate. This Pseudarthrobacter chlorophenolicus (strain ATCC 700700 / DSM 12829 / CIP 107037 / JCM 12360 / KCTC 9906 / NCIMB 13794 / A6) (Arthrobacter chlorophenolicus) protein is Arginine--tRNA ligase.